We begin with the raw amino-acid sequence, 296 residues long: Ribosomal RNA small subunit methyltransferase H (296 aa).

S-adenosyl-L-methionine is bound by residues 30-32, D49, F77, D95, and Q102; that span reads GGH.

Belongs to the methyltransferase superfamily. RsmH family.

The protein resides in the cytoplasm. The enzyme catalyses cytidine(1402) in 16S rRNA + S-adenosyl-L-methionine = N(4)-methylcytidine(1402) in 16S rRNA + S-adenosyl-L-homocysteine + H(+). In terms of biological role, specifically methylates the N4 position of cytidine in position 1402 (C1402) of 16S rRNA. The protein is Ribosomal RNA small subunit methyltransferase H of Hydrogenobaculum sp. (strain Y04AAS1).